Reading from the N-terminus, the 462-residue chain is Sodium-coupled neutral amino acid transporter 7 (462 aa).

S28 is modified (phosphoserine). The next 11 membrane-spanning stretches (helical) occupy residues 56-76 (AIFI…PAAF), 82-102 (VAAG…GLVI), 130-150 (LCEV…LIII), 178-198 (FTIS…REIG), 205-225 (FLSV…YIWP), 239-259 (ASWM…QCHV), 282-302 (AAMV…FLTF), 319-339 (MAVA…YPIL), 371-391 (VLQT…IPDI), 395-415 (ISVI…LCLI), and 428-448 (ASWW…AFIF).

This sequence belongs to the amino acid/polyamine transporter 2 family. As to quaternary structure, interacts with the mTORC1 complex; this interaction mediates the recruitment of mTORC1 to the lysosome and its subsequent activation.

The protein localises to the lysosome membrane. Its subcellular location is the cell projection. It is found in the axon. The enzyme catalyses L-asparagine(in) + Na(+)(in) = L-asparagine(out) + Na(+)(out). It catalyses the reaction L-glutamine(in) + Na(+)(in) = L-glutamine(out) + Na(+)(out). Symporter that selectively cotransports sodium ions and amino acids, such as L-glutamine and L-asparagine from the lysosome into the cytoplasm and may participates in mTORC1 activation. The transport activity requires an acidic lysosomal lumen. This chain is Sodium-coupled neutral amino acid transporter 7, found in Homo sapiens (Human).